Reading from the N-terminus, the 145-residue chain is Mitochondrial import receptor subunit TOM20 homolog (145 aa).

Over 1-6 (MVGRNS) the chain is Mitochondrial intermembrane. The helical transmembrane segment at 7-24 (AIAAGVCGALFIGYCIYF) threads the bilayer. The Cytoplasmic portion of the chain corresponds to 25-145 (DRKRRSDPNF…AQSLAEDDVE (121 aa)). Residues Lys-35, Lys-56, Lys-61, and Lys-68 each participate in a glycyl lysine isopeptide (Lys-Gly) (interchain with G-Cter in ubiquitin) cross-link. Residues Ser-135 and Ser-138 each carry the phosphoserine modification.

Belongs to the Tom20 family. As to quaternary structure, forms part of the preprotein translocase complex of the outer mitochondrial membrane (TOM complex) which consists of at least 7 different proteins (TOMM5, TOMM6, TOMM7, TOMM20, TOMM22, TOMM40 and TOMM70). Interacts with TOM22. Interacts with APEX1. Interacts with TBC1D21. Upon mitochondrial depolarization, interacts with PINK1; the interaction is required for PINK1-TOM-TIM23 supercomplex formation which is critical for PINK1 stabilization at the outer mitochondrial membrane, kinase activation and downstream mitophagy. Ubiquitinated by PRKN during mitophagy, leading to its degradation and enhancement of mitophagy. Deubiquitinated by USP30.

The protein localises to the mitochondrion outer membrane. In terms of biological role, central component of the receptor complex responsible for the recognition and translocation of cytosolically synthesized mitochondrial preproteins. Together with TOM22 functions as the transit peptide receptor at the surface of the mitochondrion outer membrane and facilitates the movement of preproteins into the TOM40 translocation pore. Required for the translocation across the mitochondrial outer membrane of cytochrome P450 monooxygenases. The sequence is that of Mitochondrial import receptor subunit TOM20 homolog (TOMM20) from Bos taurus (Bovine).